A 455-amino-acid polypeptide reads, in one-letter code: Phosphoglycerate kinase, glycosomal (455 aa).

Residues Val-23, Asp-24, Phe-25, Asn-26, Arg-39, Ser-61, His-62, Gly-64, Arg-65, Arg-132, His-168, and Arg-169 each contribute to the (2R)-3-phosphoglycerate site. The ADP site is built by Gly-214 and Ala-215. A CDP-binding site is contributed by Gly-214. AMP is bound by residues Ala-215 and Lys-216. Ala-215 is an ATP binding site. Mg(2+) is bound at residue Ala-215. Position 216 (Lys-216) interacts with (2R)-3-phosphoglycerate. Asp-219 provides a ligand contact to CDP. Asp-219 is a binding site for Mg(2+). Lys-220 and Gly-238 together coordinate ADP. An AMP-binding site is contributed by Lys-220. Lys-220 is an ATP binding site. Residue Gly-238 coordinates CDP. AMP contacts are provided by Ala-239 and Ala-311. Positions 239 and 311 each coordinate ATP. ADP is bound by residues Ala-311 and Asn-335. Residues Gly-336 and Phe-341 each contribute to the CDP site. 4 residues coordinate ADP: Phe-341, Glu-342, Asp-374, and Thr-375. Residue Glu-342 coordinates AMP. Glu-342, Asp-374, and Thr-375 together coordinate ATP. Asp-374 serves as a coordination point for Mg(2+). Residues Asp-417–Pro-455 are topogenic signal.

This sequence belongs to the phosphoglycerate kinase family. In terms of assembly, monomer. Mg(2+) serves as cofactor.

Its subcellular location is the glycosome. It carries out the reaction (2R)-3-phosphoglycerate + ATP = (2R)-3-phospho-glyceroyl phosphate + ADP. Its pathway is carbohydrate degradation; glycolysis; pyruvate from D-glyceraldehyde 3-phosphate: step 2/5. The chain is Phosphoglycerate kinase, glycosomal (PGKC) from Crithidia fasciculata.